Consider the following 238-residue polypeptide: SH2 domain-containing adapter protein F (238 aa).

2 disordered regions span residues 1 to 70 (MEPY…PWEW) and 85 to 121 (GSEN…EPSS). Residue S39 is modified to Phosphoserine. The segment covering 55-66 (EDDERPPEEYDQ) has biased composition (acidic residues). Phosphotyrosine is present on Y64. One can recognise an SH2 domain in the interval 138–233 (WYHGAISRTD…AEHMSLLYPV (96 aa)).

As to quaternary structure, interacts with phosphorylated 'Tyr-720' of PDGFRA via its SH2 domain. May become phosphorylated upon binding to PDGFRA.

Adapter protein which may play a role in the regulation of apoptosis in response to PDGF. In Mus musculus (Mouse), this protein is SH2 domain-containing adapter protein F.